The following is a 933-amino-acid chain: Melanoma-associated antigen E1 (933 aa).

4 disordered regions span residues 1 to 113 (MSLV…VSAG), 149 to 236 (GASI…GINL), 256 to 282 (SDIS…VQST), and 360 to 393 (TSGL…EDEN). Basic residues predominate over residues 8 to 23 (SRRRRGGRANGRKNSG). Composition is skewed to polar residues over residues 64–97 (GGSS…QLPT), 149–166 (GASI…NVQP), 173–184 (GTSVPPTFSEES), and 219–236 (APST…GINL). 2 consecutive MAGE domains span residues 467–666 (MEQN…YNEA) and 721–912 (LESK…YREA). The segment at 719–933 (SRLESKSRKL…RRPLVVRNLR (215 aa)) is interaction with DTNA.

Interacts with DTNA. Interacts with TRIM28.

It localises to the cytoplasm. It is found in the perinuclear region. The protein localises to the nucleus. The protein resides in the cell membrane. Functionally, may enhance ubiquitin ligase activity of RING-type zinc finger-containing E3 ubiquitin-protein ligases. Proposed to act through recruitment and/or stabilization of the Ubl-conjugating enzyme (E2) at the E3:substrate complex. The chain is Melanoma-associated antigen E1 (Magee1) from Rattus norvegicus (Rat).